An 88-amino-acid chain; its full sequence is Small ribosomal subunit protein bS20 (88 aa).

This sequence belongs to the bacterial ribosomal protein bS20 family.

Binds directly to 16S ribosomal RNA. The sequence is that of Small ribosomal subunit protein bS20 from Bartonella quintana (strain Toulouse) (Rochalimaea quintana).